The primary structure comprises 243 residues: MKSSQDDLYAKPYQQVSDFQFDNKVAGVFNDMIRRSVPGYGQIINTIGDLAQKYATPNSKIYDLGCSLGAATLSVRRRVEGRNCQIIAVDNSESMIERCKENLSAYVSETPVKLVCGDIRDIEIENASLVILNFTMQFLAPEHRQSLLKKIYDGLQPGGLLVLSEKLYFEQDKIQSTLDDLHLDFKRANGYSELEISQKRSSLEHVMKPDTLEQHKIRIKQQGFSQFSVWFQCFNFASMVAIK.

Residues Tyr40, 65–67 (GCS), 90–91 (DN), 118–119 (DI), Asn133, and Arg200 each bind S-adenosyl-L-methionine.

Belongs to the class I-like SAM-binding methyltransferase superfamily. Cx-SAM synthase family. As to quaternary structure, homodimer.

It catalyses the reaction prephenate + S-adenosyl-L-methionine = carboxy-S-adenosyl-L-methionine + 3-phenylpyruvate + H2O. Catalyzes the conversion of S-adenosyl-L-methionine (SAM) to carboxy-S-adenosyl-L-methionine (Cx-SAM). This is Carboxy-S-adenosyl-L-methionine synthase from Shewanella piezotolerans (strain WP3 / JCM 13877).